Here is a 264-residue protein sequence, read N- to C-terminus: Thymidylate synthase (264 aa).

Residue R21 coordinates dUMP. A (6R)-5,10-methylene-5,6,7,8-tetrahydrofolate-binding site is contributed by H51. 126-127 (RR) serves as a coordination point for dUMP. The active-site Nucleophile is C146. DUMP-binding positions include 166–169 (RSAD), N177, and 207–209 (HLY). D169 is a binding site for (6R)-5,10-methylene-5,6,7,8-tetrahydrofolate. A263 is a binding site for (6R)-5,10-methylene-5,6,7,8-tetrahydrofolate.

It belongs to the thymidylate synthase family. Bacterial-type ThyA subfamily. As to quaternary structure, homodimer.

The protein localises to the cytoplasm. It catalyses the reaction dUMP + (6R)-5,10-methylene-5,6,7,8-tetrahydrofolate = 7,8-dihydrofolate + dTMP. It functions in the pathway pyrimidine metabolism; dTTP biosynthesis. Functionally, catalyzes the reductive methylation of 2'-deoxyuridine-5'-monophosphate (dUMP) to 2'-deoxythymidine-5'-monophosphate (dTMP) while utilizing 5,10-methylenetetrahydrofolate (mTHF) as the methyl donor and reductant in the reaction, yielding dihydrofolate (DHF) as a by-product. This enzymatic reaction provides an intracellular de novo source of dTMP, an essential precursor for DNA biosynthesis. This chain is Thymidylate synthase, found in Cupriavidus necator (strain ATCC 17699 / DSM 428 / KCTC 22496 / NCIMB 10442 / H16 / Stanier 337) (Ralstonia eutropha).